The primary structure comprises 449 residues: Heterogeneous nuclear ribonucleoprotein H2 (449 aa).

Met-1 carries the N-acetylmethionine modification. At Met-2 the chain carries N-acetylmethionine; in Heterogeneous nuclear ribonucleoprotein H2, N-terminally processed. The RRM 1 domain occupies 11–90 (FVVKVRGLPW…RYVEVFKSNS (80 aa)). Position 23 is a phosphoserine (Ser-23). A Glycyl lysine isopeptide (Lys-Gly) (interchain with G-Cter in SUMO2) cross-link involves residue Lys-35. 2 positions are modified to phosphoserine: Ser-54 and Ser-63. A Glycyl lysine isopeptide (Lys-Gly) (interchain with G-Cter in SUMO2) cross-link involves residue Lys-87. The residue at position 90 (Ser-90) is a Phosphoserine. A Glycyl lysine isopeptide (Lys-Gly) (interchain with G-Cter in SUMO2) cross-link involves residue Lys-98. The RRM 2 domain occupies 111–188 (GFVRLRGLPF…RYIEIFKSSR (78 aa)). Position 233 is a dimethylated arginine; alternate (Arg-233). The residue at position 233 (Arg-233) is an Omega-N-methylarginine; alternate. The stretch at 234-249 (GAYGGGYGGYDDYGGY) is one 1-1 repeat. A 2 X 16 AA Gly-rich approximate repeats region spans residues 234–433 (GAYGGGYGGY…YGGQSSMSGY (200 aa)). The residue at position 246 (Tyr-246) is a Phosphotyrosine. Residues 289 to 364 (HCVHMRGLPY…RYVELFLNST (76 aa)) enclose the RRM 3 domain. Ser-310 carries the post-translational modification Phosphoserine. 3 consecutive repeat copies span residues 354-372 (HRYV…GGAY), 374-392 (HSYV…GGAY), and 418-433 (GGYG…MSGY). A 2 X 19 AA perfect repeats region spans residues 354–392 (HRYVELFLNSTAGTSGGAYDHSYVELFLNSTAGASGGAY).

As to quaternary structure, component of a ribonucleoprotein complex containing mRNAs and RNA-binding proteins including DDX5, HNRNPH2 and SRSF1 as well as splicing regulator ARVCF. Interacts with TXNL4/DIM1.

It localises to the nucleus. It is found in the nucleoplasm. Functionally, this protein is a component of the heterogeneous nuclear ribonucleoprotein (hnRNP) complexes which provide the substrate for the processing events that pre-mRNAs undergo before becoming functional, translatable mRNAs in the cytoplasm. Binds poly(RG). This Mus musculus (Mouse) protein is Heterogeneous nuclear ribonucleoprotein H2 (Hnrnph2).